The sequence spans 202 residues: Zinc metalloproteinase barnettlysin-1 (202 aa).

A Peptidase M12B domain is found at 6–200 (RYVELFIVVD…MKENPQCILN (195 aa)). Ca(2+) is bound by residues Glu-9 and Asp-93. 3 disulfides stabilise this stretch: Cys-117–Cys-197, Cys-157–Cys-181, and Cys-159–Cys-164. His-142 contacts Zn(2+). The active site involves Glu-143. Residues His-146 and His-152 each contribute to the Zn(2+) site. 2 residues coordinate Ca(2+): Cys-197 and Asn-200.

Monomer. Requires Zn(2+) as cofactor. As to expression, expressed by the venom gland.

It is found in the secreted. In terms of biological role, non-hemorrhagic metalloproteinase that hydrolyzes the alpha chains of fibrinogen and fibrin but has no activity on beta- and gamma-chains. Cleaves X-Leu bonds. Inhibits platelet aggregation induced by the von Willebrand factor (VWF) (IC(50) is 1.4 uM) and type I collagen (IC(50) is 3.2 uM). Acts by cleaving the vWF and its receptor GPIb, and by cleaving the collagen-binding Alpha-2A domain of the collagen receptor alpha-2/beta-1 integrin (ITGA2/ITGB1). Also degrades the extracellular matrix protein fibronectin (FN1), but has no effect on laminin and type I collagen. The polypeptide is Zinc metalloproteinase barnettlysin-1 (Bothrops barnetti (Barnett's lancehead)).